We begin with the raw amino-acid sequence, 380 residues long: M-protease (380 aa).

The N-terminal stretch at 1–27 is a signal peptide; that stretch reads MKKPLGKIVASTALLISVAFSSSIASA. A propeptide spanning residues 28 to 111 is cleaved from the precursor; sequence AEEAKEKYLI…IEEDAEVTTM (84 aa). Positions 34 to 111 constitute an Inhibitor I9 domain; sequence KYLIGFNEQE…IEEDAEVTTM (78 aa). A Ca(2+)-binding site is contributed by Gln113. The Peptidase S8 domain occupies 116-379; sequence PWGISRVQAP…SGLVNAEAAT (264 aa). Asp143 functions as the Charge relay system in the catalytic mechanism. Asp151 is a Ca(2+) binding site. Catalysis depends on His173, which acts as the Charge relay system. 8 residues coordinate Ca(2+): Leu184, Asn186, Ile188, Val190, Ala274, Tyr276, Ala279, and Asp302. Ser326 acts as the Charge relay system in catalysis.

The protein belongs to the peptidase S8 family. As to quaternary structure, monomer. Ca(2+) is required as a cofactor.

It localises to the secreted. Activity is inhibited by phenylmethylsulfonyl fluoride and chymostatin. Functionally, alkaline serine protease that cleaves various substrates, including N-succinyl-Ala-Ala-Pro-Phe-pNA, N-succinyl-Ala-Ala-Pro-MetpNA, oxidized insulin B chain, casein, hemoglobin and scleroproteins, such as keratin, alpha-keratin and elastin. The sequence is that of M-protease (aprE) from Shouchella clausii (strain KSM-K16) (Alkalihalobacillus clausii).